The primary structure comprises 322 residues: Cyclin mcs2 (322 aa).

S310 carries the phosphoserine modification.

It belongs to the cyclin family. Cyclin C subfamily. In terms of assembly, one of the nine subunits forming the core-TFIIH basal transcription factor. Interacts with crk1 and skp1.

Its subcellular location is the nucleus. Functionally, essential for progression through the cell cycle. Possesses kinase activity that can be detected when myelin basic protein (MBP) is provided as an exogenous substrate. This chain is Cyclin mcs2 (mcs2), found in Schizosaccharomyces pombe (strain 972 / ATCC 24843) (Fission yeast).